The primary structure comprises 877 residues: Valine--tRNA ligase (877 aa).

A 'HIGH' region motif is present at residues 46–56 (PYPTGSIHMGH). The 'KMSKS' region signature appears at 529 to 533 (KMSKS). Position 532 (K532) interacts with ATP.

It belongs to the class-I aminoacyl-tRNA synthetase family. ValS type 2 subfamily.

It localises to the cytoplasm. It catalyses the reaction tRNA(Val) + L-valine + ATP = L-valyl-tRNA(Val) + AMP + diphosphate. Functionally, catalyzes the attachment of valine to tRNA(Val). As ValRS can inadvertently accommodate and process structurally similar amino acids such as threonine, to avoid such errors, it has a 'posttransfer' editing activity that hydrolyzes mischarged Thr-tRNA(Val) in a tRNA-dependent manner. This Methanothermobacter thermautotrophicus (strain ATCC 29096 / DSM 1053 / JCM 10044 / NBRC 100330 / Delta H) (Methanobacterium thermoautotrophicum) protein is Valine--tRNA ligase.